A 165-amino-acid polypeptide reads, in one-letter code: Ubiquitin D (165 aa).

2 consecutive Ubiquitin-like domains span residues 6–81 (SCLC…LKVV) and 90–163 (LFLV…CYCI).

This sequence belongs to the ubiquitin D family. In terms of assembly, interacts directly with the 26S proteasome. Interacts with NUB1; this interaction facilitates the linking of UBD-conjugated target protein to the proteasome complex and accelerates its own degradation and that of its conjugates. Interacts (via ubiquitin-like 1 domain) with the spindle checkpoint protein MAD2L1 during mitosis. Present in aggresomes of proteasome inhibited cells. Interacts with HDAC6 under proteasome impairment conditions. Forms a thioester with UBA6 in cells stimulated with tumor necrosis factor-alpha (TNFa) and interferon-gamma (IFNg). Interacts with SQSTM1 and TP53/p53. Post-translationally, can be acetylated. In terms of tissue distribution, constitutively expressed in mature dendritic cells and B-cells. Mostly expressed in the reticuloendothelial system (e.g. thymus, spleen), the gastrointestinal system, kidney, lung and prostate gland.

It localises to the nucleus. It is found in the cytoplasm. Its function is as follows. Ubiquitin-like protein modifier which can be covalently attached to target proteins and subsequently leads to their degradation by the 26S proteasome, in a NUB1-dependent manner. Conjugation to the target protein is activated by UBA6 via adenylation of its C-terminal glycine. Promotes the expression of the proteasome subunit beta type-9 (PSMB9/LMP2). Regulates TNF-alpha-induced and LPS-mediated activation of the central mediator of innate immunity NF-kappa-B by promoting TNF-alpha-mediated proteasomal degradation of ubiquitinated-I-kappa-B-alpha. Required for TNF-alpha-induced p65 nuclear translocation in renal tubular epithelial cells (RTECs). May be involved in dendritic cell (DC) maturation, the process by which immature dendritic cells differentiate into fully competent antigen-presenting cells that initiate T-cell responses. Mediates mitotic non-disjunction and chromosome instability, in long-term in vitro culture and cancers, by abbreviating mitotic phase and impairing the kinetochore localization of MAD2L1 during the prometaphase stage of the cell cycle. May be involved in the formation of aggresomes when proteasome is saturated or impaired. Mediates apoptosis in a caspase-dependent manner, especially in renal epithelium and tubular cells during renal diseases such as polycystic kidney disease and Human immunodeficiency virus (HIV)-associated nephropathy (HIVAN). The polypeptide is Ubiquitin D (UBD) (Homo sapiens (Human)).